We begin with the raw amino-acid sequence, 142 residues long: Protein E6 (142 aa).

2 zinc fingers span residues 27–63 and 100–136; these read CIFCKFSVSIVDLASFHNKRLSVIWRDNTPFACCTKC and CQHCYSFLDYLEKLYHLYNDVDFLLIRGTWRGVCRNC.

The protein belongs to the papillomaviridae E6 protein family. As to quaternary structure, forms homodimers. Interacts with ubiquitin-protein ligase UBE3A/E6-AP; this interaction stimulates UBE3A ubiquitin activity. Interacts with host BAK1.

Its subcellular location is the host cytoplasm. The protein resides in the host nucleus. Plays a major role in the induction and maintenance of cellular transformation. E6 associates with host UBE3A/E6-AP ubiquitin-protein ligase and modulates its activity. Protects host keratinocytes from apoptosis by mediating the degradation of host BAK1. May also inhibit host immune response. The protein is Protein E6 of Homo sapiens (Human).